The following is a 427-amino-acid chain: Phosphatase PSR1 (427 aa).

Residues Cys-9 and Cys-10 are each lipidated (S-palmitoyl cysteine). Over residues 14–34 the composition is skewed to polar residues; it reads TTQSNSNSAYRQQQSSSLNKN. The disordered stretch occupies residues 14 to 223; it reads TTQSNSNSAY…SNDADDEDDE (210 aa). Basic residues predominate over residues 35-48; sequence RSVKHSNTKSRTRG. The segment covering 49-80 has biased composition (polar residues); the sequence is VHQTNSPPSKTNSAATFSSTERSTGKSGISTN. Residues 104-118 are compositionally biased toward basic and acidic residues; sequence KVEKRISKDDLYEEK. At Ser-110 the chain carries Phosphoserine. Residues 119-130 are compositionally biased toward acidic residues; it reads YEVDEDEEIDDE. The span at 131-151 shows a compositional bias: basic and acidic residues; it reads DNRRSRGIVQEKGDAVKDTSR. Lys-154 is covalently cross-linked (Glycyl lysine isopeptide (Lys-Gly) (interchain with G-Cter in ubiquitin)). Residues 155-183 are compositionally biased toward low complexity; the sequence is QQQQQQQQSQPQPQPQSQSQSQSQSQSQQ. A compositionally biased stretch (polar residues) spans 184 to 214; it reads RGPTVQVSSDHLIQDMNLSRVSSSSQASETS. Residues 253-411 enclose the FCP1 homology domain; sequence STKGKKCLIL…LDIIPLLEDL (159 aa).

In terms of assembly, interacts with WHI2.

It is found in the cell membrane. In terms of biological role, has phosphatase activity in vitro. Involved in the response to sodium and lithium ion stress (but not to potassium or sorbitol stress) by inducing transcription of the sodium pump ENA1/PMR2. Acts through a calcineurin-independent pathway and is functionally redundant with PSR2. Also involved in the general stress response; acts together with WHI2 to activate stress response element (STRE)-mediated gene expression, possibly through dephosphorylation of MSN2. The sequence is that of Phosphatase PSR1 (PSR1) from Saccharomyces cerevisiae (strain ATCC 204508 / S288c) (Baker's yeast).